The sequence spans 607 residues: Elongation factor 4 (607 aa).

Residues 11-193 (SKIRNFSIIA…QIVEKVPAPT (183 aa)) form the tr-type G domain. Residues 23–28 (DHGKST) and 140–143 (NKID) contribute to the GTP site.

This sequence belongs to the TRAFAC class translation factor GTPase superfamily. Classic translation factor GTPase family. LepA subfamily.

The protein resides in the cell membrane. The enzyme catalyses GTP + H2O = GDP + phosphate + H(+). Its function is as follows. Required for accurate and efficient protein synthesis under certain stress conditions. May act as a fidelity factor of the translation reaction, by catalyzing a one-codon backward translocation of tRNAs on improperly translocated ribosomes. Back-translocation proceeds from a post-translocation (POST) complex to a pre-translocation (PRE) complex, thus giving elongation factor G a second chance to translocate the tRNAs correctly. Binds to ribosomes in a GTP-dependent manner. The polypeptide is Elongation factor 4 (Bacillus mycoides (strain KBAB4) (Bacillus weihenstephanensis)).